The primary structure comprises 196 residues: dTTP/UTP pyrophosphatase (196 aa).

D72 (proton acceptor) is an active-site residue.

It belongs to the Maf family. YhdE subfamily. A divalent metal cation is required as a cofactor.

The protein resides in the cytoplasm. It catalyses the reaction dTTP + H2O = dTMP + diphosphate + H(+). It carries out the reaction UTP + H2O = UMP + diphosphate + H(+). Functionally, nucleoside triphosphate pyrophosphatase that hydrolyzes dTTP and UTP. May have a dual role in cell division arrest and in preventing the incorporation of modified nucleotides into cellular nucleic acids. The protein is dTTP/UTP pyrophosphatase of Chlamydia felis (strain Fe/C-56) (Chlamydophila felis).